A 258-amino-acid polypeptide reads, in one-letter code: Regulatory protein RecX (258 aa).

The protein belongs to the RecX family.

The protein resides in the cytoplasm. Its function is as follows. Modulates RecA activity. In Streptococcus uberis (strain ATCC BAA-854 / 0140J), this protein is Regulatory protein RecX.